The sequence spans 148 residues: Large ribosomal subunit protein bL9 (148 aa).

This sequence belongs to the bacterial ribosomal protein bL9 family.

Binds to the 23S rRNA. The protein is Large ribosomal subunit protein bL9 of Azotobacter vinelandii (strain DJ / ATCC BAA-1303).